Reading from the N-terminus, the 80-residue chain is Putative defensin-like protein 15 (80 aa).

A signal peptide spans 1 to 29 (MAKFASIITFIYAALVLFAAFEVPTMVEA). Glutamine 30 carries the pyrrolidone carboxylic acid modification. Intrachain disulfides connect cysteine 33-cysteine 80, cysteine 44-cysteine 65, cysteine 50-cysteine 74, and cysteine 54-cysteine 76.

Belongs to the DEFL family.

It is found in the secreted. Its function is as follows. Confers broad-spectrum resistance to pathogens. This is Putative defensin-like protein 15 (PDF1.2B) from Arabidopsis thaliana (Mouse-ear cress).